We begin with the raw amino-acid sequence, 457 residues long: tRNA modification GTPase MnmE (457 aa).

Residues Arg-24, Glu-81, and Lys-124 each contribute to the (6S)-5-formyl-5,6,7,8-tetrahydrofolate site. One can recognise a TrmE-type G domain in the interval 220 to 379 (GIQLVLAGAP…LKQKILHVVG (160 aa)). Asn-230 is a binding site for K(+). GTP-binding positions include 230–235 (NVGKSS), 249–255 (TPIAGTT), and 274–277 (DTAG). Ser-234 is a Mg(2+) binding site. Positions 249, 251, and 254 each coordinate K(+). Thr-255 serves as a coordination point for Mg(2+). Residue Lys-457 coordinates (6S)-5-formyl-5,6,7,8-tetrahydrofolate.

The protein belongs to the TRAFAC class TrmE-Era-EngA-EngB-Septin-like GTPase superfamily. TrmE GTPase family. In terms of assembly, homodimer. Heterotetramer of two MnmE and two MnmG subunits. The cofactor is K(+).

It is found in the cytoplasm. In terms of biological role, exhibits a very high intrinsic GTPase hydrolysis rate. Involved in the addition of a carboxymethylaminomethyl (cmnm) group at the wobble position (U34) of certain tRNAs, forming tRNA-cmnm(5)s(2)U34. The protein is tRNA modification GTPase MnmE of Polynucleobacter asymbioticus (strain DSM 18221 / CIP 109841 / QLW-P1DMWA-1) (Polynucleobacter necessarius subsp. asymbioticus).